The chain runs to 329 residues: MNKKILATAVLGTGALSTLFAHQAEASTTHTVRSGESLWSISHHYGITVSKLKSLNGLSSNLIFPNQVLKVSGSSNYSSRSNYGNSSSTYTVRAGDSLSSIASRYGTTYRHIMNLNGLNSFLIFPGQQLKVSGSVSSNSHSSYNSNSGGSSSTYTVRYGDSLSSIASRYGTTYQHIMRLNGLNNFFIYPGQKLRVSGSASSNTYSTRSAQSTYYSSPVFNHRNLYDWGQCTWHVFNRRAAIGKGISTYWWNANNWDNAAARDGYRIDGNPTVGSIAQSDAGYYGHVAFVERVNSNGSILVSEMNFSASPGILTYRTIPAYQVRNYKFIH.

Positions methionine 1–alanine 26 are cleaved as a signal peptide. 3 LysM domains span residues threonine 28 to valine 71, serine 88 to valine 131, and serine 152 to valine 195. Positions serine 205–histidine 329 constitute a Peptidase C51 domain.

It localises to the secreted. It is found in the cell surface. It catalyses the reaction Hydrolyzes the link between N-acetylmuramoyl residues and L-amino acid residues in certain cell-wall glycopeptides.. Functionally, peptidoglycan hydrolase involved in the splitting of the septum during cell division. The protein is N-acetylmuramoyl-L-alanine amidase sle1 (sle1) of Staphylococcus haemolyticus (strain JCSC1435).